Consider the following 61-residue polypeptide: Small ribosomal subunit protein uS14 (61 aa).

The Zn(2+) site is built by Cys-24, Cys-27, Cys-40, and Cys-43.

The protein belongs to the universal ribosomal protein uS14 family. Zinc-binding uS14 subfamily. Part of the 30S ribosomal subunit. Contacts proteins S3 and S10. Zn(2+) is required as a cofactor.

In terms of biological role, binds 16S rRNA, required for the assembly of 30S particles and may also be responsible for determining the conformation of the 16S rRNA at the A site. This is Small ribosomal subunit protein uS14 from Nitratidesulfovibrio vulgaris (strain DSM 19637 / Miyazaki F) (Desulfovibrio vulgaris).